Consider the following 227-residue polypeptide: MSVMRTGIIAKKLGMTRLFREDGTHVPVTVLHMDDVRVVAARTKERDGYAAVQLGFGHAKTKNVTKPMKGHFAAAKVEPANRLVEFRVADDAVLEAGQVLSAAHFTVGQKVDVAGISKGKGFAGGMKRWNFRGLEASHGVSISHRSLGSTGNRQDPGKTFKNKKMAGHLGGERITTLNLEVAAIDEARNLIMIKGAVPGAKDGYVLVRDAVKTARPADAAYPAALKA.

At glutamine 154 the chain carries N5-methylglutamine.

This sequence belongs to the universal ribosomal protein uL3 family. In terms of assembly, part of the 50S ribosomal subunit. Forms a cluster with proteins L14 and L19. Post-translationally, methylated by PrmB.

Its function is as follows. One of the primary rRNA binding proteins, it binds directly near the 3'-end of the 23S rRNA, where it nucleates assembly of the 50S subunit. This chain is Large ribosomal subunit protein uL3, found in Acidiphilium cryptum (strain JF-5).